Here is a 232-residue protein sequence, read N- to C-terminus: Large ribosomal subunit protein uL16m (232 aa).

A mitochondrion-targeting transit peptide spans 1–41 (MFPYLTRMNLSIKMGGLTLKESSPNAFLNNTTIARRFKHEY).

It belongs to the universal ribosomal protein uL16 family. As to quaternary structure, component of the mitochondrial large ribosomal subunit (mt-LSU). Mature yeast 74S mitochondrial ribosomes consist of a small (37S) and a large (54S) subunit. The 37S small subunit contains a 15S ribosomal RNA (15S mt-rRNA) and 34 different proteins. The 54S large subunit contains a 21S rRNA (21S mt-rRNA) and 46 different proteins.

The protein resides in the mitochondrion. Its function is as follows. Component of the mitochondrial ribosome (mitoribosome), a dedicated translation machinery responsible for the synthesis of mitochondrial genome-encoded proteins, including at least some of the essential transmembrane subunits of the mitochondrial respiratory chain. The mitoribosomes are attached to the mitochondrial inner membrane and translation products are cotranslationally integrated into the membrane. This Saccharomyces cerevisiae (strain ATCC 204508 / S288c) (Baker's yeast) protein is Large ribosomal subunit protein uL16m (MRPL16).